Here is a 381-residue protein sequence, read N- to C-terminus: Flap endonuclease 1 (381 aa).

Residues 1–105 (MGIKNLATLI…YELDKRKVRR (105 aa)) form an N-domain region. Residue aspartate 34 coordinates Mg(2+). DNA is bound by residues arginine 47 and arginine 71. 5 residues coordinate Mg(2+): aspartate 87, glutamate 156, glutamate 158, aspartate 177, and aspartate 179. The segment at 120 to 251 (EIIKHERRLV…VNALKLIKEH (132 aa)) is I-domain. Glutamate 156 lines the DNA pocket. Positions 229 and 231 each coordinate DNA. Mg(2+) is bound at residue aspartate 231. The interval 339 to 347 (VQKRLDSFF) is interaction with PCNA. The tract at residues 360 to 381 (AAKKAKDAKKKAAAKGKIAKRR) is disordered. Basic residues predominate over residues 365 to 381 (KDAKKKAAAKGKIAKRR).

This sequence belongs to the XPG/RAD2 endonuclease family. FEN1 subfamily. In terms of assembly, interacts with PCNA. Three molecules of FEN1 bind to one PCNA trimer with each molecule binding to one PCNA monomer. PCNA stimulates the nuclease activity without altering cleavage specificity. Mg(2+) is required as a cofactor. Phosphorylated. Phosphorylation upon DNA damage induces relocalization to the nuclear plasma.

It is found in the nucleus. It localises to the nucleolus. Its subcellular location is the nucleoplasm. The protein localises to the mitochondrion. Its function is as follows. Structure-specific nuclease with 5'-flap endonuclease and 5'-3' exonuclease activities involved in DNA replication and repair. During DNA replication, cleaves the 5'-overhanging flap structure that is generated by displacement synthesis when DNA polymerase encounters the 5'-end of a downstream Okazaki fragment. It enters the flap from the 5'-end and then tracks to cleave the flap base, leaving a nick for ligation. Also involved in the long patch base excision repair (LP-BER) pathway, by cleaving within the apurinic/apyrimidinic (AP) site-terminated flap. Acts as a genome stabilization factor that prevents flaps from equilibrating into structures that lead to duplications and deletions. Also possesses 5'-3' exonuclease activity on nicked or gapped double-stranded DNA, and exhibits RNase H activity. Also involved in replication and repair of rDNA and in repairing mitochondrial DNA. This Kluyveromyces lactis (strain ATCC 8585 / CBS 2359 / DSM 70799 / NBRC 1267 / NRRL Y-1140 / WM37) (Yeast) protein is Flap endonuclease 1.